A 154-amino-acid polypeptide reads, in one-letter code: Small ribosomal subunit protein uS7 (154 aa).

The protein belongs to the universal ribosomal protein uS7 family. Part of the 30S ribosomal subunit. Contacts proteins S9 and S11.

One of the primary rRNA binding proteins, it binds directly to 16S rRNA where it nucleates assembly of the head domain of the 30S subunit. Is located at the subunit interface close to the decoding center, probably blocks exit of the E-site tRNA. In Karelsulcia muelleri (strain GWSS) (Sulcia muelleri), this protein is Small ribosomal subunit protein uS7.